An 89-amino-acid chain; its full sequence is Small ribosomal subunit protein uS19 (89 aa).

The protein belongs to the universal ribosomal protein uS19 family.

Protein S19 forms a complex with S13 that binds strongly to the 16S ribosomal RNA. The sequence is that of Small ribosomal subunit protein uS19 from Stenotrophomonas maltophilia (strain K279a).